The primary structure comprises 444 residues: U-box domain-containing protein 31 (444 aa).

The U-box domain maps to 59–133; the sequence is EIPSVFICPI…YTWFSQKYVL (75 aa). 2 ARM repeats span residues 301 to 340 and 343 to 382; these read KQVRNLLVRIGAVPQLVDVLPCLDVECLESALFVLDSLCL and EGRIALKDSVNTIPHTVRLLMKVSEKCTNYAISILWSVCK.

It carries out the reaction S-ubiquitinyl-[E2 ubiquitin-conjugating enzyme]-L-cysteine + [acceptor protein]-L-lysine = [E2 ubiquitin-conjugating enzyme]-L-cysteine + N(6)-ubiquitinyl-[acceptor protein]-L-lysine.. It participates in protein modification; protein ubiquitination. Functions as an E3 ubiquitin ligase. This is U-box domain-containing protein 31 (PUB31) from Arabidopsis thaliana (Mouse-ear cress).